The chain runs to 406 residues: MTYYELVITNIKIMSINNQLRELIKSGTFAGILLIIAFTLAIIVSNNIFLTKYYSSFIYSKFSLTIGNVRLQTTFIELVNDGLMTFFFLLIGLEMKFHLVEGEHKNKKKLILPAVAALGGVVVPVLIYMFFNYDKPRLIKGWAIPIATDTAFVLGILSFFSRHISLELRAFIIGFSLIDDAFALIILALFYTKTINTPALLISSVIIFILFILNYRQVKQLFYYIIVGLLLWISMVESGIQGTLCGAIIALFIPVNIKGEFNTSFKKLENLTSPFVNYFILPLFVFMNSGILLEYFAFKGTCSNSILALIYGIIFGLFVGKQLGIMLFSYPFVKFKLCNLPSDTSWLKFYSIAILGGIGFTLSLFIGSITFESSCPSNSMRAAVIIGSLISALFGVAVLKYCTGKE.

12 helical membrane-spanning segments follow: residues 29–49 (FAGI…NNIF), 75–95 (FIEL…GLEM), 111–131 (ILPA…YMFF), 141–161 (GWAI…SFFS), 170–190 (AFII…LALF), 195–215 (INTP…ILNY), 220–240 (QLFY…ESGI), 242–262 (GTLC…GEFN), 278–298 (YFIL…YFAF), 306–326 (ILAL…LGIM), 349–369 (FYSI…IGSI), and 382–402 (AAVI…LKYC).

The protein belongs to the NhaA Na(+)/H(+) (TC 2.A.33) antiporter family.

It localises to the cell inner membrane. It catalyses the reaction Na(+)(in) + 2 H(+)(out) = Na(+)(out) + 2 H(+)(in). Its function is as follows. Na(+)/H(+) antiporter that extrudes sodium in exchange for external protons. The protein is Na(+)/H(+) antiporter NhaA of Rickettsia massiliae (strain Mtu5).